The following is an 828-amino-acid chain: Protein TAPT1 homolog (828 aa).

Composition is skewed to low complexity over residues asparagine 67–isoleucine 83, glutamine 212–proline 233, and serine 302–asparagine 321. Disordered regions lie at residues asparagine 67–glycine 92, glutamine 212–tyrosine 236, and glutamine 297–isoleucine 346. 5 helical membrane-spanning segments follow: residues isoleucine 428–isoleucine 448, glutamine 472–isoleucine 492, isoleucine 562–valine 582, serine 722–valine 742, and isoleucine 754–isoleucine 774. Low complexity predominate over residues leucine 797–threonine 822. A disordered region spans residues leucine 797–asparagine 828.

The protein belongs to the TAPT1 family.

It localises to the membrane. This Dictyostelium discoideum (Social amoeba) protein is Protein TAPT1 homolog.